Reading from the N-terminus, the 94-residue chain is Co-chaperonin GroES (94 aa).

Belongs to the GroES chaperonin family. In terms of assembly, heptamer of 7 subunits arranged in a ring. Interacts with the chaperonin GroEL.

The protein resides in the cytoplasm. Its function is as follows. Together with the chaperonin GroEL, plays an essential role in assisting protein folding. The GroEL-GroES system forms a nano-cage that allows encapsulation of the non-native substrate proteins and provides a physical environment optimized to promote and accelerate protein folding. GroES binds to the apical surface of the GroEL ring, thereby capping the opening of the GroEL channel. This chain is Co-chaperonin GroES, found in Streptococcus pneumoniae (strain Hungary19A-6).